A 209-amino-acid chain; its full sequence is Large ribosomal subunit protein uL4 (209 aa).

The interval 47-72 (TSSTKTRSEVRGSSKKPWKQKGTGRA) is disordered. Basic residues predominate over residues 59-72 (SSKKPWKQKGTGRA).

Belongs to the universal ribosomal protein uL4 family. Part of the 50S ribosomal subunit.

In terms of biological role, one of the primary rRNA binding proteins, this protein initially binds near the 5'-end of the 23S rRNA. It is important during the early stages of 50S assembly. It makes multiple contacts with different domains of the 23S rRNA in the assembled 50S subunit and ribosome. Functionally, forms part of the polypeptide exit tunnel. The polypeptide is Large ribosomal subunit protein uL4 (Borreliella burgdorferi (strain ZS7) (Borrelia burgdorferi)).